Here is an 83-residue protein sequence, read N- to C-terminus: BmKBT-like peptide (83 aa).

Residues 1–19 form the signal peptide; that stretch reads MKAALLLVISTLMLIGVLT. Positions 21 to 81 constitute an LCN-type CS-alpha/beta domain; the sequence is KSGYPIQHDG…TWSRETNKCR (61 aa). Intrachain disulfides connect C31–C80, C35–C54, C41–C61, and C45–C63. A propeptide (removed by a carboxypeptidase) is located at residue K83.

This sequence belongs to the long (4 C-C) scorpion toxin superfamily. Sodium channel inhibitor family. Beta subfamily. Expressed by the venom gland.

Its subcellular location is the secreted. Its function is as follows. Sodium channel inhibitor. Possesses potent toxicity in mice but induces only paralysis in cotton bollworm. The chain is BmKBT-like peptide from Olivierus martensii (Manchurian scorpion).